A 550-amino-acid chain; its full sequence is Arginine--tRNA ligase (550 aa).

The 'HIGH' region motif lies at 130-140 (ANPTGPIHIGG).

Belongs to the class-I aminoacyl-tRNA synthetase family. Monomer.

Its subcellular location is the cytoplasm. It carries out the reaction tRNA(Arg) + L-arginine + ATP = L-arginyl-tRNA(Arg) + AMP + diphosphate. The sequence is that of Arginine--tRNA ligase from Mycobacterium sp. (strain KMS).